We begin with the raw amino-acid sequence, 123 residues long: Small ribosomal subunit protein uS13 (123 aa).

Positions 97–123 are disordered; it reads PCRGQRTHTNSRTRKGPRRGVMAKKKK.

Belongs to the universal ribosomal protein uS13 family. As to quaternary structure, part of the 30S ribosomal subunit. Forms a loose heterodimer with protein S19. Forms two bridges to the 50S subunit in the 70S ribosome.

In terms of biological role, located at the top of the head of the 30S subunit, it contacts several helices of the 16S rRNA. In the 70S ribosome it contacts the 23S rRNA (bridge B1a) and protein L5 of the 50S subunit (bridge B1b), connecting the 2 subunits; these bridges are implicated in subunit movement. Contacts the tRNAs in the A and P-sites. This is Small ribosomal subunit protein uS13 from Solidesulfovibrio magneticus (strain ATCC 700980 / DSM 13731 / RS-1) (Desulfovibrio magneticus).